We begin with the raw amino-acid sequence, 130 residues long: Small ribosomal subunit protein uS8 (130 aa).

Belongs to the universal ribosomal protein uS8 family. Part of the 30S ribosomal subunit. Contacts proteins S5 and S12.

Functionally, one of the primary rRNA binding proteins, it binds directly to 16S rRNA central domain where it helps coordinate assembly of the platform of the 30S subunit. The protein is Small ribosomal subunit protein uS8 of Buchnera aphidicola subsp. Schizaphis graminum (strain Sg).